Consider the following 631-residue polypeptide: Phosphomethylpyrimidine synthase (631 aa).

Residues N239, M268, Y297, H333, 353–355 (SRG), 394–397 (DGLR), and E433 each bind substrate. Residue H437 coordinates Zn(2+). Y460 serves as a coordination point for substrate. Zn(2+) is bound at residue H501. Positions 581, 584, and 589 each coordinate [4Fe-4S] cluster.

This sequence belongs to the ThiC family. Homodimer. Requires [4Fe-4S] cluster as cofactor.

It carries out the reaction 5-amino-1-(5-phospho-beta-D-ribosyl)imidazole + S-adenosyl-L-methionine = 4-amino-2-methyl-5-(phosphooxymethyl)pyrimidine + CO + 5'-deoxyadenosine + formate + L-methionine + 3 H(+). The protein operates within cofactor biosynthesis; thiamine diphosphate biosynthesis. In terms of biological role, catalyzes the synthesis of the hydroxymethylpyrimidine phosphate (HMP-P) moiety of thiamine from aminoimidazole ribotide (AIR) in a radical S-adenosyl-L-methionine (SAM)-dependent reaction. The protein is Phosphomethylpyrimidine synthase of Salmonella heidelberg (strain SL476).